Here is a 233-residue protein sequence, read N- to C-terminus: Forkhead box protein L3 (233 aa).

The fork-head DNA-binding region spans 32–130 (RPAYSYIALI…ENGNYRRRRR (99 aa)). The span at 125-134 (YRRRRRRRGP) shows a compositional bias: basic residues. A disordered region spans residues 125-198 (YRRRRRRRGP…PRDLKFSIDY (74 aa)). The span at 175–184 (REPPASPAPP) shows a compositional bias: pro residues. A compositionally biased stretch (basic and acidic residues) spans 185–194 (GKEHPRDLKF).

The protein resides in the nucleus. Its function is as follows. Probable transcriptional regulator. The chain is Forkhead box protein L3 from Homo sapiens (Human).